We begin with the raw amino-acid sequence, 3313 residues long: PHD finger protein rhinoceros (3313 aa).

Positions 1–16 (MSQRGKRGNQHHHQSH) are enriched in basic residues. The tract at residues 1-136 (MSQRGKRGNQ…QGASTSSSWQ (136 aa)) is disordered. Low complexity-rich tracts occupy residues 42-71 (PPNG…ATGG) and 100-134 (LGAA…TSSS). The segment at 323-373 (NVICDVCRSPDSEEANEMVFCDNCNICVHQACYGITAIPSGQWLCRTCSMG) adopts a PHD-type 1 zinc-finger fold. The C2HC pre-PHD-type zinc-finger motif lies at 375–409 (TPDCVLCPNKAGAMKSNKSGKHWAHVSCALWIPEV). Residues 433-487 (LVCVLCRKRVGSCIQCSKHSMSKGKKENAGGASGGGSASVTSSMHKANKYATGTG) form a PHD-type 2; degenerate zinc finger. 17 disordered regions span residues 453–526 (MSKG…ARAQ), 708–1076 (LQSG…TKAA), 1107–1842 (KEAK…PPSH), 1961–2033 (AQKE…TMGN), 2104–2136 (PVTA…RMQR), 2145–2164 (ARRS…PPAT), 2219–2252 (AAPQ…FNGG), 2353–2374 (PAYP…PAHP), 2398–2514 (VAAK…PPPM), 2563–2587 (TTRG…LHPV), 2647–2679 (ATGT…QPPA), 2827–2871 (SCGL…SSSR), 2888–2954 (LAGA…IKIR), 2978–2998 (YEMT…YSTP), 3017–3077 (DFDK…SATT), 3144–3233 (KAEK…SLPE), and 3259–3313 (YENS…CEVR). Over residues 512-526 (KNDMTSEERNQARAQ) the composition is skewed to basic and acidic residues. Positions 735 to 749 (KKLNNGAITSRTSSP) are enriched in polar residues. Over residues 760 to 772 (STSTSTATATTAA) the composition is skewed to low complexity. Residues 792 to 802 (GAATGTSTHNK) are compositionally biased toward polar residues. Composition is skewed to low complexity over residues 803–861 (TQSQ…ASGI) and 894–912 (EAAA…ATSS). Basic and acidic residues predominate over residues 919 to 934 (QQRRRQEPERERDGRG). Residues 942–955 (TVPNRTQPTKSKQS) show a composition bias toward polar residues. The segment covering 956-972 (TQADAGSGAGTGAAVET) has biased composition (low complexity). Over residues 994-1003 (ESLSSDESEE) the composition is skewed to acidic residues. Residues 1015 to 1025 (AALSSGLAASG) show a composition bias toward low complexity. A compositionally biased stretch (polar residues) spans 1058 to 1072 (VESNVSDSQNQQTIR). Basic and acidic residues-rich tracts occupy residues 1159–1168 (AADRMREPES) and 1178–1205 (KLKD…KEQS). Positions 1250-1266 (EAKSTAPAAKPTAAKTS) are enriched in low complexity. Polar residues predominate over residues 1285-1301 (LKSSKPLQDTTFSTANE). Composition is skewed to low complexity over residues 1308 to 1324 (AATT…GVAT), 1377 to 1404 (SSSS…SGSD), and 1451 to 1464 (PAAS…AAAT). Positions 1475–1485 (TARTRQNSTNK) are enriched in polar residues. The segment covering 1551 to 1579 (SPEKQTARRKSRADESPKKIPNLEHEINQ) has biased composition (basic and acidic residues). The span at 1638-1650 (PVVEPEVETEIEP) shows a compositional bias: acidic residues. Residues 1667–1678 (TAPTHTQLSANA) show a composition bias toward polar residues. The segment covering 1691–1702 (PAAPLPASPTPT) has biased composition (pro residues). The segment covering 1722–1734 (SRWRSRRRRRRRS) has biased composition (basic residues). A coiled-coil region spans residues 1744–1773 (HTQHLLNEMEMARELEEERKNELLANASKY). Residues 1753-1765 (EMARELEEERKNE) show a composition bias toward basic and acidic residues. Polar residues-rich tracts occupy residues 1771–1781 (SKYSASTSSPA) and 1796–1805 (DSNSANSGGD). Low complexity predominate over residues 1806–1819 (QQQQQQQQPLPQQL). Positions 1823–1832 (SPSSEVASTI) are enriched in polar residues. Residues 1965–1984 (QQQQQQQQQQQQQQQQQQQQ) are compositionally biased toward low complexity. 2 stretches are compositionally biased toward polar residues: residues 1985 to 1999 (SCLY…SVAS) and 2007 to 2018 (MTANSGSYANSL). The segment covering 2019–2033 (TNTPNATPTNATMGN) has biased composition (low complexity). Positions 2106–2118 (TAQSGAGSNSNKL) are enriched in polar residues. Low complexity-rich tracts occupy residues 2148–2157 (SSSPSSVSES) and 2222–2242 (QQQT…QQQQ). The segment covering 2439–2451 (PVQPQPPTPPAPA) has biased composition (pro residues). Residues 2479 to 2488 (GSGGSGAPGR) are compositionally biased toward gly residues. Residues 2658–2679 (PAVSAAPVAPAPAPAANSQPPA) show a composition bias toward low complexity. The segment covering 2891–2900 (ASGGGAGTAS) has biased composition (gly residues). Positions 2909–2924 (CSSGSNNDNNGKTGAA) are enriched in polar residues. Positions 2935 to 2946 (KTLESSEDDHQT) are enriched in basic and acidic residues. Over residues 3017–3026 (DFDKGEENNK) the composition is skewed to basic and acidic residues. The span at 3046-3065 (KRPKSSKPKKDKKEKKRQKQ) shows a compositional bias: basic residues. Residues 3179–3198 (TSPQGLLLNSFTPHSQNANA) are compositionally biased toward polar residues. A compositionally biased stretch (low complexity) spans 3268–3290 (SASGTGSASSNSCNSNSNNNNNN). Residues 3291-3302 (GSGGGAASGGGS) are compositionally biased toward gly residues.

It belongs to the JADE family.

Its subcellular location is the nucleus. Its function is as follows. May function as a negative regulator of the EGFR/Ras/MAPK signaling pathway during eye development. This is PHD finger protein rhinoceros (rno) from Drosophila pseudoobscura pseudoobscura (Fruit fly).